Here is a 268-residue protein sequence, read N- to C-terminus: Small ribosomal subunit protein uS10m (268 aa).

The N-terminal 64 residues, 1 to 64, are a transit peptide targeting the mitochondrion; it reads MIIRPVVRSL…RITTTTEAPK (64 aa).

This sequence belongs to the universal ribosomal protein uS10 family. In terms of assembly, component of the mitochondrial small ribosomal subunit (mt-SSU). Mature N.crassa 74S mitochondrial ribosomes consist of a small (37S) and a large (54S) subunit. The 37S small subunit contains a 16S ribosomal RNA (16S mt-rRNA) and 32 different proteins. The 54S large subunit contains a 23S rRNA (23S mt-rRNA) and 42 different proteins.

It localises to the mitochondrion. Component of the mitochondrial ribosome (mitoribosome), a dedicated translation machinery responsible for the synthesis of mitochondrial genome-encoded proteins, including at least some of the essential transmembrane subunits of the mitochondrial respiratory chain. The mitoribosomes are attached to the mitochondrial inner membrane and translation products are cotranslationally integrated into the membrane. In Neurospora crassa (strain ATCC 24698 / 74-OR23-1A / CBS 708.71 / DSM 1257 / FGSC 987), this protein is Small ribosomal subunit protein uS10m (mrp-10).